Reading from the N-terminus, the 126-residue chain is Heavy metal-associated isoprenylated plant protein 14 (126 aa).

The HMA domain maps to 3–69; it reads AKNAVLQLSI…LCNTEIVSVD (67 aa). Residue C123 is modified to Cysteine methyl ester. The S-farnesyl cysteine moiety is linked to residue C123. Residues 124–126 constitute a propeptide, removed in mature form; the sequence is VIM.

This sequence belongs to the HIPP family.

In terms of biological role, probable heavy-metal-binding protein. The polypeptide is Heavy metal-associated isoprenylated plant protein 14 (Arabidopsis thaliana (Mouse-ear cress)).